The chain runs to 87 residues: Small ribosomal subunit protein bS20 (87 aa).

The tract at residues 1-26 is disordered; it reads MANIKSAKKRAVQSEKARKHNASRRS.

This sequence belongs to the bacterial ribosomal protein bS20 family.

Functionally, binds directly to 16S ribosomal RNA. The sequence is that of Small ribosomal subunit protein bS20 from Salmonella gallinarum (strain 287/91 / NCTC 13346).